We begin with the raw amino-acid sequence, 219 residues long: Ribose-5-phosphate isomerase A (219 aa).

Residues 28–31 (TGST), 81–84 (DGAD), and 94–97 (KGGG) contribute to the substrate site. Residue Glu-103 is the Proton acceptor of the active site. Substrate is bound at residue Lys-121.

It belongs to the ribose 5-phosphate isomerase family. As to quaternary structure, homodimer.

The catalysed reaction is aldehydo-D-ribose 5-phosphate = D-ribulose 5-phosphate. It participates in carbohydrate degradation; pentose phosphate pathway; D-ribose 5-phosphate from D-ribulose 5-phosphate (non-oxidative stage): step 1/1. Functionally, catalyzes the reversible conversion of ribose-5-phosphate to ribulose 5-phosphate. This is Ribose-5-phosphate isomerase A from Pectobacterium atrosepticum (strain SCRI 1043 / ATCC BAA-672) (Erwinia carotovora subsp. atroseptica).